The following is a 371-amino-acid chain: tRNA-specific 2-thiouridylase MnmA (371 aa).

ATP is bound by residues 13–20 (GMSGGVDS) and methionine 39. An interaction with target base in tRNA region spans residues 99 to 101 (NPD). Cysteine 104 functions as the Nucleophile in the catalytic mechanism. Residues cysteine 104 and cysteine 200 are joined by a disulfide bond. Glycine 128 is a binding site for ATP. The segment at 150 to 152 (KDQ) is interaction with tRNA. Cysteine 200 functions as the Cysteine persulfide intermediate in the catalytic mechanism. The tract at residues 308 to 309 (RY) is interaction with tRNA.

This sequence belongs to the MnmA/TRMU family.

It localises to the cytoplasm. It catalyses the reaction S-sulfanyl-L-cysteinyl-[protein] + uridine(34) in tRNA + AH2 + ATP = 2-thiouridine(34) in tRNA + L-cysteinyl-[protein] + A + AMP + diphosphate + H(+). In terms of biological role, catalyzes the 2-thiolation of uridine at the wobble position (U34) of tRNA, leading to the formation of s(2)U34. The polypeptide is tRNA-specific 2-thiouridylase MnmA (Bacillus thuringiensis (strain Al Hakam)).